A 350-amino-acid chain; its full sequence is S-adenosylmethionine:tRNA ribosyltransferase-isomerase (350 aa).

Belongs to the QueA family. Monomer.

The protein resides in the cytoplasm. The enzyme catalyses 7-aminomethyl-7-carbaguanosine(34) in tRNA + S-adenosyl-L-methionine = epoxyqueuosine(34) in tRNA + adenine + L-methionine + 2 H(+). It participates in tRNA modification; tRNA-queuosine biosynthesis. Functionally, transfers and isomerizes the ribose moiety from AdoMet to the 7-aminomethyl group of 7-deazaguanine (preQ1-tRNA) to give epoxyqueuosine (oQ-tRNA). This is S-adenosylmethionine:tRNA ribosyltransferase-isomerase from Vibrio parahaemolyticus serotype O3:K6 (strain RIMD 2210633).